The primary structure comprises 157 residues: Succinate dehydrogenase [ubiquinone] cytochrome b small subunit, mitochondrial (157 aa).

The N-terminal 45 residues, 1-45 (MAALVLLRAGLARPRGVPTALLRGTLLRHSAVLTAAADRSAPARQ), are a transit peptide targeting the mitochondrion. Over 46 to 61 (SHGGAPQGHGSSKAAS) the chain is Mitochondrial matrix. Residues 62–83 (LHWTSERAVSALLLGLLPAAYL) form a helical membrane-spanning segment. Residues 84 to 88 (YPGPA) are Mitochondrial intermembrane-facing. A helical transmembrane segment spans residues 89–109 (VDYSLAAALTLHGHWGLGQVI). Residue His100 participates in heme b binding. Residues 110-118 (TDYVHGDTP) are Mitochondrial matrix-facing. A ubiquinone is bound at residue Tyr112. Residues 119–140 (IKVANTGLYVLSAITFTGLCYF) traverse the membrane as a helical segment. Topologically, residues 141 to 157 (NYYDVGICKAVAMLWSI) are mitochondrial intermembrane.

The protein belongs to the CybS family. As to quaternary structure, component of complex II composed of four subunits: the flavoprotein (FP) SDHA, iron-sulfur protein (IP) SDHB, and a cytochrome b560 composed of SDHC and SDHD.

The protein resides in the mitochondrion inner membrane. It participates in carbohydrate metabolism; tricarboxylic acid cycle. In terms of biological role, membrane-anchoring subunit of succinate dehydrogenase (SDH) that is involved in complex II of the mitochondrial electron transport chain and is responsible for transferring electrons from succinate to ubiquinone (coenzyme Q). SDH also oxidizes malate to the non-canonical enol form of oxaloacetate, enol-oxaloacetate. Enol-oxaloacetate, which is a potent inhibitor of the succinate dehydrogenase activity, is further isomerized into keto-oxaloacetate. In Gallus gallus (Chicken), this protein is Succinate dehydrogenase [ubiquinone] cytochrome b small subunit, mitochondrial (SDHD).